The primary structure comprises 244 residues: tRNA pseudouridine synthase B (244 aa).

D46 acts as the Nucleophile in catalysis.

Belongs to the pseudouridine synthase TruB family. Type 1 subfamily.

It catalyses the reaction uridine(55) in tRNA = pseudouridine(55) in tRNA. In terms of biological role, responsible for synthesis of pseudouridine from uracil-55 in the psi GC loop of transfer RNAs. The sequence is that of tRNA pseudouridine synthase B from Bordetella bronchiseptica (strain ATCC BAA-588 / NCTC 13252 / RB50) (Alcaligenes bronchisepticus).